Reading from the N-terminus, the 291-residue chain is ATP synthase gamma chain (291 aa).

This sequence belongs to the ATPase gamma chain family. As to quaternary structure, F-type ATPases have 2 components, CF(1) - the catalytic core - and CF(0) - the membrane proton channel. CF(1) has five subunits: alpha(3), beta(3), gamma(1), delta(1), epsilon(1). CF(0) has three main subunits: a, b and c.

The protein localises to the cell inner membrane. Its function is as follows. Produces ATP from ADP in the presence of a proton gradient across the membrane. The gamma chain is believed to be important in regulating ATPase activity and the flow of protons through the CF(0) complex. The sequence is that of ATP synthase gamma chain from Methylobacillus flagellatus (strain ATCC 51484 / DSM 6875 / VKM B-1610 / KT).